A 58-amino-acid polypeptide reads, in one-letter code: MKRQKRDRLDRAFAKGFQAGVGGRSKEMCPYSNLDSRSQWLGGWREGVDGRITGLFTK.

Belongs to the ribosome modulation factor family.

The protein resides in the cytoplasm. Functionally, during stationary phase, converts 70S ribosomes to an inactive dimeric form (100S ribosomes). The chain is Ribosome modulation factor from Shewanella amazonensis (strain ATCC BAA-1098 / SB2B).